Consider the following 98-residue polypeptide: Integration host factor subunit beta (98 aa).

A disordered region spans residues 59–98; it reads RTGRNPKTGESVTLPGKYVPHFKPGKEMRDRVNESIQSEG. Positions 82–91 are enriched in basic and acidic residues; it reads PGKEMRDRVN.

It belongs to the bacterial histone-like protein family. In terms of assembly, heterodimer of an alpha and a beta chain.

Its function is as follows. This protein is one of the two subunits of integration host factor, a specific DNA-binding protein that functions in genetic recombination as well as in transcriptional and translational control. This is Integration host factor subunit beta from Saccharophagus degradans (strain 2-40 / ATCC 43961 / DSM 17024).